We begin with the raw amino-acid sequence, 130 residues long: MADVRYYGTGRRKHSVARVHLVAGDGKVVVNGRDISEYFGHETLIMMAKSPLVLTETEGKYDVIVNVNGGGYTGQAGAIRHGVSRALLQADPEFRPSLKEKGFLTRDARMKERKKYGLKAARRAPQFSKR.

The protein belongs to the universal ribosomal protein uS9 family.

In Exiguobacterium sp. (strain ATCC BAA-1283 / AT1b), this protein is Small ribosomal subunit protein uS9.